We begin with the raw amino-acid sequence, 892 residues long: MEGPEIKAVEAVIDNGSFGKRTLRFETGRLAQQADGAVAAYLDDDSMILSTTTAGSSPKENYDFFPLTVDVEEKMYAAGKIPGSFFRREGRPSSEAILACRIIDRPLRPLFPHTLRNEVQVVETVLAVNPDDAYDVVALNAASASTMISGLPFEGPVSGVRLALIDGQWVAFPRWSERERAVFEIVVAGRVVENGDVAIAMIEAGAGKNAWHLIYDEGQTKPDEEVVAGGLEAAKPFIKVICEAQAELKKIAAKETKEFQLFPEYTEDLYNRIDEIAHADLDEALSIAEKLPRQDRIHEIKEGVKATLAGEFTDMEDAEKDKEIGNAFKELQRQIVRRRILTQDYRIDGRGLRDIRTLSAEVDIVPRVHGSALFQRGETQILGVTTLNMLKMEQQIDALSGPQSKRYMHNYEMPPYSTGETGRVGSPKRREIGHGALAEKALVPVLPSREEFPYAIRQVSEAIGSNGSTSMGSVCASTLSLLAAGVPLKAPVAGIAMGLVSGDVDGQHIYKTLTDILGAEDAFGDMDFKVAGTSEFITALQLDTKLDGIPADILASALQQAKEARTTILEVINECIDGPAEMSPYAPRIITTTVPVDKIGEVIGPKGKMINQIQEDTGAEIAIEDDGTVYISSEGGEAAEKAKEIIDQIANPHVPEAGETYNGKVVKTTSFGAFVNLTPGTDGLLHISQIRNLANGERIDAVEDVLKEGDTVEVVVQGVDDRGKISLAIPGFEDQESSAPRRDRGDRDDRRGGRGRRDDRRRSDDRDDRDYDDRPRRRRSDRDDDRDYDDRPRRRRSDRDDRDYDRDDRRSSRSDRDDRDYDDRPRRRRSDRDDRDYDRDDRRSDRRRGSRRDDRNPRYAADENYDEYRADREERSERPRRRVRRDFDPFED.

The interval 407–427 is disordered; the sequence is YMHNYEMPPYSTGETGRVGSP. Residues aspartate 521 and aspartate 527 each contribute to the Mg(2+) site. One can recognise a KH domain in the interval 587-646; the sequence is PRIITTTVPVDKIGEVIGPKGKMINQIQEDTGAEIAIEDDGTVYISSEGGEAAEKAKEII. The S1 motif domain maps to 658–730; sequence GETYNGKVVK…DRGKISLAIP (73 aa). The disordered stretch occupies residues 727–892; that stretch reads LAIPGFEDQE…VRRDFDPFED (166 aa). Composition is skewed to basic and acidic residues over residues 739–844 and 851–877; these read APRR…DRRS and RRDD…ERSE.

It belongs to the polyribonucleotide nucleotidyltransferase family. Mg(2+) serves as cofactor.

The protein resides in the cytoplasm. It catalyses the reaction RNA(n+1) + phosphate = RNA(n) + a ribonucleoside 5'-diphosphate. Involved in mRNA degradation. Catalyzes the phosphorolysis of single-stranded polyribonucleotides processively in the 3'- to 5'-direction. This is Polyribonucleotide nucleotidyltransferase from Bifidobacterium adolescentis (strain ATCC 15703 / DSM 20083 / NCTC 11814 / E194a).